Consider the following 357-residue polypeptide: CD4+ T-cell-stimulating antigen (357 aa).

The first 22 residues, 1 to 22, serve as a signal peptide directing secretion; the sequence is MKKRTFALALSMIIASGVVLGA. Residue C23 is the site of N-palmitoyl cysteine attachment. C23 carries the S-diacylglycerol cysteine lipid modification.

This sequence belongs to the BMP lipoprotein family.

The protein resides in the cell membrane. This is CD4+ T-cell-stimulating antigen (tcsA) from Listeria innocua serovar 6a (strain ATCC BAA-680 / CLIP 11262).